A 207-amino-acid chain; its full sequence is Large ribosomal subunit protein uL4 (207 aa).

Residues 48 to 89 (THKVKNRSEVSGGGRKPWRQKGTGRARQGSIRSPQWRGGGTV) are disordered.

It belongs to the universal ribosomal protein uL4 family. As to quaternary structure, part of the 50S ribosomal subunit.

Functionally, one of the primary rRNA binding proteins, this protein initially binds near the 5'-end of the 23S rRNA. It is important during the early stages of 50S assembly. It makes multiple contacts with different domains of the 23S rRNA in the assembled 50S subunit and ribosome. Its function is as follows. Forms part of the polypeptide exit tunnel. This Bacillus cytotoxicus (strain DSM 22905 / CIP 110041 / 391-98 / NVH 391-98) protein is Large ribosomal subunit protein uL4.